The primary structure comprises 277 residues: Putative phosphoenolpyruvate synthase regulatory protein (277 aa).

Position 157–164 (157–164) interacts with ADP; the sequence is GVSRCGKT.

This sequence belongs to the pyruvate, phosphate/water dikinase regulatory protein family. PSRP subfamily.

It carries out the reaction [pyruvate, water dikinase] + ADP = [pyruvate, water dikinase]-phosphate + AMP + H(+). It catalyses the reaction [pyruvate, water dikinase]-phosphate + phosphate + H(+) = [pyruvate, water dikinase] + diphosphate. Bifunctional serine/threonine kinase and phosphorylase involved in the regulation of the phosphoenolpyruvate synthase (PEPS) by catalyzing its phosphorylation/dephosphorylation. The polypeptide is Putative phosphoenolpyruvate synthase regulatory protein (Cronobacter sakazakii (strain ATCC BAA-894) (Enterobacter sakazakii)).